The primary structure comprises 240 residues: Pyridoxine 5'-phosphate synthase (240 aa).

N7 is a binding site for 3-amino-2-oxopropyl phosphate. D9–H10 serves as a coordination point for 1-deoxy-D-xylulose 5-phosphate. Position 18 (R18) interacts with 3-amino-2-oxopropyl phosphate. H43 (proton acceptor) is an active-site residue. Residues R45 and H50 each coordinate 1-deoxy-D-xylulose 5-phosphate. E70 acts as the Proton acceptor in catalysis. Position 100 (T100) interacts with 1-deoxy-D-xylulose 5-phosphate. Residue H191 is the Proton donor of the active site. Residues G192 and G213–H214 each bind 3-amino-2-oxopropyl phosphate.

Belongs to the PNP synthase family. In terms of assembly, homooctamer; tetramer of dimers.

It is found in the cytoplasm. The catalysed reaction is 3-amino-2-oxopropyl phosphate + 1-deoxy-D-xylulose 5-phosphate = pyridoxine 5'-phosphate + phosphate + 2 H2O + H(+). It participates in cofactor biosynthesis; pyridoxine 5'-phosphate biosynthesis; pyridoxine 5'-phosphate from D-erythrose 4-phosphate: step 5/5. Functionally, catalyzes the complicated ring closure reaction between the two acyclic compounds 1-deoxy-D-xylulose-5-phosphate (DXP) and 3-amino-2-oxopropyl phosphate (1-amino-acetone-3-phosphate or AAP) to form pyridoxine 5'-phosphate (PNP) and inorganic phosphate. The polypeptide is Pyridoxine 5'-phosphate synthase (Synechococcus elongatus (strain ATCC 33912 / PCC 7942 / FACHB-805) (Anacystis nidulans R2)).